Consider the following 491-residue polypeptide: 1-aminocyclopropane-1-carboxylate synthase (491 aa).

Position 278 is an N6-(pyridoxal phosphate)lysine (K278).

The protein belongs to the class-I pyridoxal-phosphate-dependent aminotransferase family. As to quaternary structure, homodimer. Requires pyridoxal 5'-phosphate as cofactor.

The catalysed reaction is S-adenosyl-L-methionine = 1-aminocyclopropane-1-carboxylate + S-methyl-5'-thioadenosine + H(+). It functions in the pathway alkene biosynthesis; ethylene biosynthesis via S-adenosyl-L-methionine; ethylene from S-adenosyl-L-methionine: step 1/2. In terms of biological role, catalyzes the formation of 1-aminocyclopropane-1-carboxylate, a direct precursor of ethylene in higher plants. In Nicotiana tabacum (Common tobacco), this protein is 1-aminocyclopropane-1-carboxylate synthase (ACS1).